The following is a 120-amino-acid chain: Large ribosomal subunit protein bL20 (120 aa).

It belongs to the bacterial ribosomal protein bL20 family.

Binds directly to 23S ribosomal RNA and is necessary for the in vitro assembly process of the 50S ribosomal subunit. It is not involved in the protein synthesizing functions of that subunit. The chain is Large ribosomal subunit protein bL20 from Blochmanniella pennsylvanica (strain BPEN).